Here is a 1442-residue protein sequence, read N- to C-terminus: MTASDLLTLPQLLAQYSSSAPQNKVFYTTSTKNSHSSFKGLESVATDATHLLNNQDPLNTIKDQLSKDILTTVFTDETTLVKSIHHLYSLPNKLPLVITVDLNLQDYSAIPALKDLSFPILISSDLQTAISNADSSYKIATSSLTPVFHFLNLEKIGTSTAIEQDIDFPTLEIANEETKVALSEATDSLTNFELVKGKESITTVIVNLSPYDAEFSSVLPSNVGLIKIRVYRPWNFSKFLEILPSSVTKIAVLQGVSKKSQSNEFQPFLLDFFGNFNELVSRNIEQVVLTNIGNVNDYGNVINTVISNINKKEPDNNLFLGESNEKAEEQAEVTQLISSVKKVVNLEDAYIKVLKQLFSSNLQILNQFSSETIEPSNPEFGFGRFLKQEAQREELISLAKTSLDPSLYLSEDANKIVQLLSKWLSFNGRDLDEAQLQEANATGLEIFQLLQSNQDSSTVLKFLKIAPTSDSFIFKSSWLIGSDAWSYDLGHSGIQQVLSSRKNINVLLIDSEPYDHRKQNQDRKKDVGLYAMNYYSAYVASVAVYASYTQLLTAIIEASKYNGPSIVLAYLPYNSENDTPLEVLKETKNAVESGYWPLYRFNPVYDDPSTDKEAFSLDSSVIRKQLQDFLDRENKLTLLTRKDPSLSRNLKQSAGDALTRKQEKRSKAAFDQLLEGLSGPPLHVYYASDGGNAANLAKRLAARASARGLKATVLSMDDIILEELPGEENVVFITSTAGQGEFPQDGKSFWEALKNDTDLDLASLNVAVFGLGDSEYWPRKEDKHYFNKPSQDLFKRLELLSAKALIPLGLGDDQDADGFQTAYSEWEPKLWEALGVSGAAVDDEPKPVTNEDIKRESNFLRGTISENLKDTSSGGVTHANEQLMKFHGIYTQDDRDIREIRKSQGLEPYYMFMARARLPGGKTTPQQWLALDHLSDTSGNGTLKLTTRATFQIHGVLKKNLKHTLRGMNAVLMDTLAAAGDVNRNVMVSALPTNAKVHQQIADMGKLISDHFLPKTTAYHEVWLEGPEEQDDDPSWPSIFENRKDGPRKKKTLVSGNALVDIEPIYGPTYLPRKFKFNIAVPPYNDVDVLSIDVGLVAIVNPETQIVEGYNVFVGGGMGTTHNNKKTYPRLGSCLGFVKTEDIIPPLEGIVIVQRDHGDRKDRKHARLKYTVDDMGVEGFKQKVEEYWGKKFEPERPFEFKSNIDYFGWIKDETGLNHFTAFIENGRVEDTPDLPQKTGIRKVAEYMLKTNSGHFRLTGNQHLVISNITDEHVAGIKSILKTYKLDNTDFSGLRLSSSSCVGLPTCGLAFAESERFLPDIITQLEDCLEEYGLRHDSIIMRMTGCPNGCSRPWLGELALVGKAPHTYNLMLGGGYLGQRLNKLYKANVKDEEIVDYIKPLFKRYALEREEGEHFGDFCIRVGIIKPTTEGKYFHEDVSEDAY.

Positions 682-831 constitute a Flavodoxin-like domain; that stretch reads LHVYYASDGG…AYSEWEPKLW (150 aa). The residue at position 903 (S903) is a Phosphoserine. [4Fe-4S] cluster is bound by residues C1300, C1306, C1345, and C1349. C1349 lines the siroheme pocket.

It belongs to the nitrite and sulfite reductase 4Fe-4S domain family. As to quaternary structure, alpha(2)-beta(2). The alpha component is a flavoprotein, the beta component is a hemoprotein. Requires siroheme as cofactor. [4Fe-4S] cluster serves as cofactor.

Its subcellular location is the cytoplasm. The catalysed reaction is hydrogen sulfide + 3 NADP(+) + 3 H2O = sulfite + 3 NADPH + 4 H(+). It participates in sulfur metabolism; hydrogen sulfide biosynthesis; hydrogen sulfide from sulfite (NADPH route): step 1/1. Functionally, catalyzes the reduction of sulfite to sulfide, one of several activities required for the biosynthesis of L-cysteine from sulfate. In Saccharomyces cerevisiae (strain ATCC 204508 / S288c) (Baker's yeast), this protein is Sulfite reductase [NADPH] subunit beta (MET5).